The primary structure comprises 277 residues: 2-dehydro-3-deoxyphosphooctonate aldolase (277 aa).

The protein belongs to the KdsA family.

The protein resides in the cytoplasm. It catalyses the reaction D-arabinose 5-phosphate + phosphoenolpyruvate + H2O = 3-deoxy-alpha-D-manno-2-octulosonate-8-phosphate + phosphate. The protein operates within carbohydrate biosynthesis; 3-deoxy-D-manno-octulosonate biosynthesis; 3-deoxy-D-manno-octulosonate from D-ribulose 5-phosphate: step 2/3. Its pathway is bacterial outer membrane biogenesis; lipopolysaccharide biosynthesis. The sequence is that of 2-dehydro-3-deoxyphosphooctonate aldolase from Alkalilimnicola ehrlichii (strain ATCC BAA-1101 / DSM 17681 / MLHE-1).